Reading from the N-terminus, the 116-residue chain is Putative iron-sulfur cluster insertion protein ErpA (116 aa).

Iron-sulfur cluster is bound by residues Cys-44, Cys-108, and Cys-110.

The protein belongs to the HesB/IscA family. In terms of assembly, homodimer. The cofactor is iron-sulfur cluster.

Its function is as follows. Required for insertion of 4Fe-4S clusters. The polypeptide is Putative iron-sulfur cluster insertion protein ErpA (Janthinobacterium sp. (strain Marseille) (Minibacterium massiliensis)).